A 543-amino-acid chain; its full sequence is Probable malate:quinone oxidoreductase (543 aa).

The protein belongs to the MQO family. It depends on FAD as a cofactor.

The enzyme catalyses (S)-malate + a quinone = a quinol + oxaloacetate. It functions in the pathway carbohydrate metabolism; tricarboxylic acid cycle; oxaloacetate from (S)-malate (quinone route): step 1/1. In Acinetobacter baylyi (strain ATCC 33305 / BD413 / ADP1), this protein is Probable malate:quinone oxidoreductase.